A 239-amino-acid chain; its full sequence is Ribonuclease PH (239 aa).

Residues Arg-86 and 124–126 (GTR) contribute to the phosphate site.

It belongs to the RNase PH family. As to quaternary structure, homohexameric ring arranged as a trimer of dimers.

It catalyses the reaction tRNA(n+1) + phosphate = tRNA(n) + a ribonucleoside 5'-diphosphate. Functionally, phosphorolytic 3'-5' exoribonuclease that plays an important role in tRNA 3'-end maturation. Removes nucleotide residues following the 3'-CCA terminus of tRNAs; can also add nucleotides to the ends of RNA molecules by using nucleoside diphosphates as substrates, but this may not be physiologically important. Probably plays a role in initiation of 16S rRNA degradation (leading to ribosome degradation) during starvation. This Rhizobium leguminosarum bv. trifolii (strain WSM2304) protein is Ribonuclease PH.